We begin with the raw amino-acid sequence, 206 residues long: FKBP-type 22 kDa peptidyl-prolyl cis-trans isomerase (206 aa).

The 87-residue stretch at 120–206 (TDRVRVHYTG…VFEVELLEIL (87 aa)) folds into the PPIase FKBP-type domain.

As to quaternary structure, homodimer.

Its subcellular location is the cytoplasm. It localises to the periplasm. The catalysed reaction is [protein]-peptidylproline (omega=180) = [protein]-peptidylproline (omega=0). Strongly inhibited by FK506. Its function is as follows. PPIases accelerate the folding of proteins. Catalyzes the cis-trans isomerization of proline imidic peptide bonds in oligopeptides. Displays a preference for substrates with a lysyl residue in the P1 position. This is FKBP-type 22 kDa peptidyl-prolyl cis-trans isomerase (fklB) from Escherichia coli (strain K12).